A 98-amino-acid polypeptide reads, in one-letter code: NADH-ubiquinone oxidoreductase chain 4L (98 aa).

The next 3 membrane-spanning stretches (helical) occupy residues 1-21 (MSLT…GLLM), 29-49 (SLLC…MAIL), and 61-81 (IILL…LVMV).

It belongs to the complex I subunit 4L family. As to quaternary structure, core subunit of respiratory chain NADH dehydrogenase (Complex I) which is composed of 45 different subunits.

Its subcellular location is the mitochondrion inner membrane. It catalyses the reaction a ubiquinone + NADH + 5 H(+)(in) = a ubiquinol + NAD(+) + 4 H(+)(out). In terms of biological role, core subunit of the mitochondrial membrane respiratory chain NADH dehydrogenase (Complex I) which catalyzes electron transfer from NADH through the respiratory chain, using ubiquinone as an electron acceptor. Part of the enzyme membrane arm which is embedded in the lipid bilayer and involved in proton translocation. The sequence is that of NADH-ubiquinone oxidoreductase chain 4L (MT-ND4L) from Vampyressa melissa (Melissa's yellow-eared bat).